The sequence spans 542 residues: Probable serine/threonine-protein kinase ndrB (542 aa).

Positions Met1–Asn52 are disordered. Low complexity predominate over residues Ser9–Glu18. Acidic residues predominate over residues Glu19–Ile51. Positions Phe130 to Phe437 constitute a Protein kinase domain. ATP is bound by residues Ile136 to Val144 and Lys159. Residue Asp258 is the Proton acceptor of the active site. Residues Lys438–Phe510 enclose the AGC-kinase C-terminal domain. A disordered region spans residues Ile452–Arg486. Over residues Gln455 to Phe465 the composition is skewed to polar residues.

It belongs to the protein kinase superfamily. AGC Ser/Thr protein kinase family.

The protein resides in the cytoplasm. It carries out the reaction L-seryl-[protein] + ATP = O-phospho-L-seryl-[protein] + ADP + H(+). The catalysed reaction is L-threonyl-[protein] + ATP = O-phospho-L-threonyl-[protein] + ADP + H(+). This Dictyostelium discoideum (Social amoeba) protein is Probable serine/threonine-protein kinase ndrB (ndrB).